A 465-amino-acid chain; its full sequence is Argininosuccinate lyase (465 aa).

It belongs to the lyase 1 family. Argininosuccinate lyase subfamily.

It localises to the cytoplasm. The catalysed reaction is 2-(N(omega)-L-arginino)succinate = fumarate + L-arginine. It participates in amino-acid biosynthesis; L-arginine biosynthesis; L-arginine from L-ornithine and carbamoyl phosphate: step 3/3. The protein is Argininosuccinate lyase of Methylococcus capsulatus (strain ATCC 33009 / NCIMB 11132 / Bath).